A 333-amino-acid polypeptide reads, in one-letter code: Small GTPase-like protein LIP2 (333 aa).

Residues 11 to 288 (NKEHMVAPLC…YKYNTLPQHN (278 aa)) form a small GTPase-like region. GTP-binding positions include 29 to 36 (GDSGVGKS), 90 to 94 (DVSGH), and 160 to 163 (NKAD). A compositionally biased stretch (polar residues) spans 242–253 (SPSSAWSLSHAP). The disordered stretch occupies residues 242–265 (SPSSAWSLSHAPSQRLDEGTSDED).

This sequence belongs to the small GTPase superfamily.

The protein is Small GTPase-like protein LIP2 of Arabidopsis thaliana (Mouse-ear cress).